The primary structure comprises 445 residues: 6-phosphogluconate dehydrogenase, decarboxylating (445 aa).

NADP(+) contacts are provided by residues 1-4 (AVMG), 22-24 (NRS), 63-65 (VKA), and asparagine 91. Substrate is bound by residues asparagine 91 and 117-119 (SGG). Catalysis depends on lysine 172, which acts as the Proton acceptor. Substrate is bound at residue 175–176 (HN). Catalysis depends on glutamate 179, which acts as the Proton donor. The substrate site is built by tyrosine 180, lysine 249, arginine 276, arginine 434, and histidine 440.

The protein belongs to the 6-phosphogluconate dehydrogenase family. In terms of assembly, homodimer.

It catalyses the reaction 6-phospho-D-gluconate + NADP(+) = D-ribulose 5-phosphate + CO2 + NADPH. It functions in the pathway carbohydrate degradation; pentose phosphate pathway; D-ribulose 5-phosphate from D-glucose 6-phosphate (oxidative stage): step 3/3. Its function is as follows. Catalyzes the oxidative decarboxylation of 6-phosphogluconate to ribulose 5-phosphate and CO(2), with concomitant reduction of NADP to NADPH. This Raoultella planticola (Klebsiella planticola) protein is 6-phosphogluconate dehydrogenase, decarboxylating (gnd).